We begin with the raw amino-acid sequence, 325 residues long: uncharacterized protein (325 aa).

A helical transmembrane segment spans residues 10 to 30; it reads IVFVSLAALVLLVSVSVFIYH. In terms of domain architecture, AB hydrolase-1 spans 94–166; sequence KIAVVDRAGY…EIKAIIAMDI (73 aa).

It is found in the cell membrane. This is an uncharacterized protein from Bacillus subtilis (strain 168).